The primary structure comprises 405 residues: Caspase-1 (405 aa).

In terms of domain architecture, CARD spans 1 to 91 (MADKVLKEKR…HLAETLRLSS (91 aa)). Residues 1 to 119 (MADKVLKEKR…SSPALQAMPD (119 aa)) constitute a propeptide that is removed on maturation. Residues histidine 238 and cysteine 286 contribute to the active site. Residues 299–317 (STGTSGNSSSLAPDDFEDD) constitute a propeptide that is removed on maturation. Residue serine 303 is modified to Phosphoserine.

It belongs to the peptidase C14A family. In terms of assembly, heterotetramer that consists of two anti-parallel arranged heterodimers, each one formed by a 20 kDa (Caspase-1 subunit p20) and a 10 kDa (Caspase-1 subunit p10) subunit. May be a component of the inflammasome, a protein complex which also includes PYCARD, CARD8 and NLRP2 and whose function would be the activation of pro-inflammatory caspases. Component of the AIM2 PANoptosome complex, a multiprotein complex that drives inflammatory cell death (PANoptosis). Both the p10 and p20 subunits interact with MEFV. Interacts with CARD17P/INCA and CARD18. Interacts with SERPINB1; this interaction regulates CASP1 activity. As to quaternary structure, heterotetramer that consists of two anti-parallel arranged heterodimers, each one formed by a 20 kDa (Caspase-1 subunit p20) and a 10 kDa (Caspase-1 subunit p10) subunit. The two subunits are derived from the precursor sequence by an autocatalytic mechanism. In terms of processing, ubiquitinated via 'Lys-11'-linked polyubiquitination. Deubiquitinated by USP8.

The protein resides in the cytoplasm. It localises to the cell membrane. The enzyme catalyses Strict requirement for an Asp residue at position P1 and has a preferred cleavage sequence of Tyr-Val-Ala-Asp-|-.. Its function is as follows. Thiol protease involved in a variety of inflammatory processes by proteolytically cleaving other proteins, such as the precursors of the inflammatory cytokines interleukin-1 beta (IL1B) and interleukin 18 (IL18) as well as the pyroptosis inducer Gasdermin-D (GSDMD), into active mature peptides. Plays a key role in cell immunity as an inflammatory response initiator: once activated through formation of an inflammasome complex, it initiates a pro-inflammatory response through the cleavage of the two inflammatory cytokines IL1B and IL18, releasing the mature cytokines which are involved in a variety of inflammatory processes. Cleaves a tetrapeptide after an Asp residue at position P1. Also initiates pyroptosis, a programmed lytic cell death pathway, through cleavage of GSDMD. In contrast to cleavage of interleukin IL1B, recognition and cleavage of GSDMD is not strictly dependent on the consensus cleavage site but depends on an exosite interface on CASP1 that recognizes and binds the Gasdermin-D, C-terminal (GSDMD-CT) part. Cleaves and activates CASP7 in response to bacterial infection, promoting plasma membrane repair. Upon inflammasome activation, during DNA virus infection but not RNA virus challenge, controls antiviral immunity through the cleavage of CGAS, rendering it inactive. In apoptotic cells, cleaves SPHK2 which is released from cells and remains enzymatically active extracellularly. In Equus caballus (Horse), this protein is Caspase-1 (CASP1).